Here is a 449-residue protein sequence, read N- to C-terminus: MFKTLTQNLTKIFDRLVNSGILTENQIDTAMRDVRVALLESDVALPVIKGFIAEVKQKALGQEVIKSVSPGQMIIKIIHEEMINLLASSESTTKLNLNSKPPVNLLMVGLQGGGKTTASGKLALLLKNQNKKVLLVSLDTYRPAAQEQLAIIANSVNIDSLPIVQGEQPLDIVKRAISEAKIFAYDVVIYDTAGRIQIDNVMMEEALAIKKILNPTETLLVIDSMTGQDAVVTARSFSDKLEISGLILSRIDGDTKGGAALSVKYLTQKPIKFLSCGEKLTDLEEFDAERLASRILDMGDIISFVKKAASIVDREEAERTAIKLKSGKFDLNDYLKHMRSIKKMGGFGSILSMLPGSGKIIDQIDQSKLDSRIIEHQEAIILSMTLKERKNPDIINASRRKRIAAGAGMTVQKVNILLKQYKQISAVMKKASKMNPQNLFRSGISKLFS.

Residues 109 to 116 (GLQGGGKT), 191 to 195 (DTAGR), and 249 to 252 (SRID) each bind GTP.

It belongs to the GTP-binding SRP family. SRP54 subfamily. As to quaternary structure, part of the signal recognition particle protein translocation system, which is composed of SRP and FtsY. SRP is a ribonucleoprotein composed of Ffh and a 4.5S RNA molecule.

The protein resides in the cytoplasm. The catalysed reaction is GTP + H2O = GDP + phosphate + H(+). Involved in targeting and insertion of nascent membrane proteins into the cytoplasmic membrane. Binds to the hydrophobic signal sequence of the ribosome-nascent chain (RNC) as it emerges from the ribosomes. The SRP-RNC complex is then targeted to the cytoplasmic membrane where it interacts with the SRP receptor FtsY. Interaction with FtsY leads to the transfer of the RNC complex to the Sec translocase for insertion into the membrane, the hydrolysis of GTP by both Ffh and FtsY, and the dissociation of the SRP-FtsY complex into the individual components. This Rickettsia typhi (strain ATCC VR-144 / Wilmington) protein is Signal recognition particle protein.